The primary structure comprises 843 residues: uncharacterized protein (843 aa).

The segment at residues 15–42 (CLRCKQRKIKCDKLWPTCSKCKASSSIC) is a DNA-binding region (zn(2)-C6 fungal-type).

The protein resides in the nucleus. Its function is as follows. Required for growth on non-fermentable carbon sources. This is an uncharacterized protein from Saccharomyces cerevisiae (strain ATCC 204508 / S288c) (Baker's yeast).